A 305-amino-acid polypeptide reads, in one-letter code: Glycine--tRNA ligase alpha subunit (305 aa).

It belongs to the class-II aminoacyl-tRNA synthetase family. In terms of assembly, tetramer of two alpha and two beta subunits.

The protein localises to the cytoplasm. It catalyses the reaction tRNA(Gly) + glycine + ATP = glycyl-tRNA(Gly) + AMP + diphosphate. The chain is Glycine--tRNA ligase alpha subunit from Streptococcus pyogenes serotype M18 (strain MGAS8232).